Reading from the N-terminus, the 448-residue chain is Putative F-box/LRR-repeat protein At5g25860 (448 aa).

The region spanning 11 to 58 (RDAVNCLPDEILAKILSYLPTKRAVSTSLISKRWRNLFALMIQLFESQ) is the F-box domain. LRR repeat units follow at residues 82–106 (QESF…SILC), 185–214 (FLHA…FLHD), 215–240 (LRGY…TVHF), 310–341 (TLSL…YFES), and 342–367 (NEKE…VLKG).

The sequence is that of Putative F-box/LRR-repeat protein At5g25860 from Arabidopsis thaliana (Mouse-ear cress).